Here is a 472-residue protein sequence, read N- to C-terminus: MSSGTLYDKVWDLHRVADLPGGSTQLFIGLHLIHEVTSPQAFAALEDKGLTVRCPQRTVATVDHIVPTTSQARPFADPLAEEMLSTLERNCSHHGITLHGLGSGRQGIVHVIAPELGLTQPGMTVACGDSHTSTHGAFGAIAFGIGTSQVRDVLASQSLAMNKLKVRRIWVENQLSPGVFAKDLILHVIRSLGVKAGVGYAYEFSGPAIEALSMEERMTLCNMAIEGGARCGYVNPDQTTFDYLHGRAQAPSAEAWDRAVSWWRSLASGADACFDDEVRFDAATIAPTVTWGITPGQGIGVDETVPRPEQLDPADRPIAEEAYRYMDLAPGQAIAGVPVDVCFIGSCTNGRLSDLQAAAAVAKGRHVASGIRAFVVPGSEQVARAAEAEGLDAVFREAGFEWREPGCSMCLAMNPDRLEGRQISASSSNRNFKGRQGSASGRTLLMSPAMVAAAAITGQVRDVRQLNCMTTD.

[4Fe-4S] cluster contacts are provided by Cys347, Cys407, and Cys410.

This sequence belongs to the aconitase/IPM isomerase family. LeuC type 1 subfamily. Heterodimer of LeuC and LeuD. Requires [4Fe-4S] cluster as cofactor.

The catalysed reaction is (2R,3S)-3-isopropylmalate = (2S)-2-isopropylmalate. It participates in amino-acid biosynthesis; L-leucine biosynthesis; L-leucine from 3-methyl-2-oxobutanoate: step 2/4. Its function is as follows. Catalyzes the isomerization between 2-isopropylmalate and 3-isopropylmalate, via the formation of 2-isopropylmaleate. The chain is 3-isopropylmalate dehydratase large subunit from Synechococcus sp. (strain WH7803).